The sequence spans 156 residues: RING finger protein 224 (156 aa).

The RING-type zinc-finger motif lies at 24-71; that stretch reads CIICCSAYDLSGHLPRRLYCGHTFCQACVRRLDTPAPEQRWIPCPQCR.

This Homo sapiens (Human) protein is RING finger protein 224 (RNF224).